Consider the following 261-residue polypeptide: Eukaryotic translation initiation factor 3 subunit J-A (261 aa).

Residues Met1–Ala11 are compositionally biased toward low complexity. The segment at Met1–Pro113 is disordered. Positions Ala4 to Val72 are sufficient for interaction with EIF3B. Phosphoserine occurs at positions 14, 16, and 23. Residues Glu43–Glu64 show a composition bias toward acidic residues. The span at Glu65 to Lys109 shows a compositional bias: basic and acidic residues. Residues Lys73–Thr138 are a coiled coil. A Glycyl lysine isopeptide (Lys-Gly) (interchain with G-Cter in SUMO2) cross-link involves residue Lys109. Residue Thr112 is modified to Phosphothreonine. The residue at position 130 (Ser130) is a Phosphoserine. The tract at residues Tyr246–Met261 is promotes stable association with the 40S ribosome. At Tyr257 the chain carries Phosphotyrosine.

It belongs to the eIF-3 subunit J family. In terms of assembly, component of the eukaryotic translation initiation factor 3 (eIF-3) complex, which is composed of 13 subunits: EIF3A, EIF3B, EIF3C, EIF3D, EIF3E, EIF3F, EIF3G, EIF3H, EIF3I, EIF3J, EIF3K, EIF3L and EIF3M. The eIF-3 complex appears to include 3 stable modules: module A is composed of EIF3A, EIF3B, EIF3G and EIF3I; module B is composed of EIF3F, EIF3H, and EIF3M; and module C is composed of EIF3C, EIF3D, EIF3E, EIF3K and EIF3L. EIF3C of module C binds EIF3B of module A and EIF3H of module B, thereby linking the three modules. EIF3J is a labile subunit that binds to the eIF-3 complex via EIF3B. The eIF-3 complex interacts with RPS6KB1 under conditions of nutrient depletion. Mitogenic stimulation leads to binding and activation of a complex composed of MTOR and RPTOR, leading to phosphorylation and release of RPS6KB1 and binding of EIF4B to eIF-3. Post-translationally, phosphorylated. Phosphorylation is enhanced upon serum stimulation.

It is found in the cytoplasm. Component of the eukaryotic translation initiation factor 3 (eIF-3) complex, which is required for several steps in the initiation of protein synthesis. The eIF-3 complex associates with the 40S ribosome and facilitates the recruitment of eIF-1, eIF-1A, eIF-2:GTP:methionyl-tRNAi and eIF-5 to form the 43S pre-initiation complex (43S PIC). The eIF-3 complex stimulates mRNA recruitment to the 43S PIC and scanning of the mRNA for AUG recognition. The eIF-3 complex is also required for disassembly and recycling of post-termination ribosomal complexes and subsequently prevents premature joining of the 40S and 60S ribosomal subunits prior to initiation. The eIF-3 complex specifically targets and initiates translation of a subset of mRNAs involved in cell proliferation, including cell cycling, differentiation and apoptosis, and uses different modes of RNA stem-loop binding to exert either translational activation or repression. This subunit binds directly within the mRNA entry channel of the 40S ribosome to the aminoacyl (A) site. It may regulate the interaction between the 43S PIC and mRNA. This Mus musculus (Mouse) protein is Eukaryotic translation initiation factor 3 subunit J-A (Eif3j1).